The following is a 206-amino-acid chain: Large ribosomal subunit protein uL4 (206 aa).

Residues 47–77 are disordered; sequence GTQSTKTRSEVRGGGIKPWRQKGTGRARQGS.

Belongs to the universal ribosomal protein uL4 family. As to quaternary structure, part of the 50S ribosomal subunit.

Its function is as follows. One of the primary rRNA binding proteins, this protein initially binds near the 5'-end of the 23S rRNA. It is important during the early stages of 50S assembly. It makes multiple contacts with different domains of the 23S rRNA in the assembled 50S subunit and ribosome. Functionally, forms part of the polypeptide exit tunnel. The polypeptide is Large ribosomal subunit protein uL4 (Clostridium beijerinckii (strain ATCC 51743 / NCIMB 8052) (Clostridium acetobutylicum)).